Reading from the N-terminus, the 408-residue chain is Histidine--tRNA ligase (408 aa).

The protein belongs to the class-II aminoacyl-tRNA synthetase family. In terms of assembly, homodimer.

The protein localises to the cytoplasm. The catalysed reaction is tRNA(His) + L-histidine + ATP = L-histidyl-tRNA(His) + AMP + diphosphate + H(+). In Campylobacter jejuni subsp. doylei (strain ATCC BAA-1458 / RM4099 / 269.97), this protein is Histidine--tRNA ligase.